A 359-amino-acid polypeptide reads, in one-letter code: Histidinol-phosphate aminotransferase (359 aa).

An N6-(pyridoxal phosphate)lysine modification is found at K217.

This sequence belongs to the class-II pyridoxal-phosphate-dependent aminotransferase family. Histidinol-phosphate aminotransferase subfamily. In terms of assembly, homodimer. Pyridoxal 5'-phosphate serves as cofactor.

The enzyme catalyses L-histidinol phosphate + 2-oxoglutarate = 3-(imidazol-4-yl)-2-oxopropyl phosphate + L-glutamate. Its pathway is amino-acid biosynthesis; L-histidine biosynthesis; L-histidine from 5-phospho-alpha-D-ribose 1-diphosphate: step 7/9. The chain is Histidinol-phosphate aminotransferase (hisC) from Salmonella typhimurium (strain LT2 / SGSC1412 / ATCC 700720).